We begin with the raw amino-acid sequence, 255 residues long: Uridylate kinase (255 aa).

The segment at 1–21 is disordered; the sequence is MSAAAAGRGERLNHAGNPGHR. 30–33 lines the ATP pocket; sequence KLGG. Gly-71 provides a ligand contact to UMP. Positions 72 and 76 each coordinate ATP. UMP contacts are provided by residues Asp-91 and 152-159; that span reads MGLPYFST. The ATP site is built by Phe-185 and Asp-188.

Belongs to the UMP kinase family. In terms of assembly, homohexamer.

Its subcellular location is the cytoplasm. The catalysed reaction is UMP + ATP = UDP + ADP. It participates in pyrimidine metabolism; CTP biosynthesis via de novo pathway; UDP from UMP (UMPK route): step 1/1. Inhibited by UTP. Functionally, catalyzes the reversible phosphorylation of UMP to UDP. This chain is Uridylate kinase, found in Mycobacterium leprae (strain TN).